The sequence spans 574 residues: FAD-linked oxidoreductase sor8 (574 aa).

The N-terminal stretch at 1 to 27 is a signal peptide; that stretch reads MYAPPFVRAFGIAVLAVLPSFSSPATA. N-linked (GlcNAc...) asparagine glycosylation is found at Asn58, Asn112, Asn136, Asn266, Asn312, Asn363, and Asn384. The region spanning 126–305 is the FAD-binding PCMH-type domain; it reads VIGTYVQYAV…YSMTVKAHAN (180 aa).

This sequence belongs to the oxygen-dependent FAD-linked oxidoreductase family. FAD is required as a cofactor.

It functions in the pathway secondary metabolite biosynthesis. Its function is as follows. FAD-linked oxidoreductase; part of the SOR gene cluster that mediates the biosynthesis of sorbicillinoids, a diverse group of yellow secondary metabolites that restrict growth of competing pathogenic fungi but not of bacteria. Sorbicillinoids biosynthesis requires the action of two PKSs. The SOR cluster is required for the production of trichodimerol and dihydrotrichotetronin, with sor2 being sufficient for production of trichodimerol, but not dihydrotrichotetronin in the light. Sor1 iteratively combines three acetyl units and the growing chain is modified by the ketoacyl reductase subunit, and optional by the enoyl reductase subunit in the second cycle. The polyketide is then handed over to the PKS sor2, which adds three more acetyl units, and two methyl groups. Sor2 releases an aldehyde, which undergoes spontaneous cyclization resulting in the formation of sorbicillin or 2',3'-dihydrosorbicillin. The monooxygenase sor5 oxidizes sorbicillin and 2',3'-dihydrosorbicillin to 2',3'-dihydrosorbicillinol and sorbicillinol, respectively. The oxidoreductase sor8 further converts sorbicillinol into oxosorbicillinol. Sorbicillinol is the building block for the other sorbicillinoids such as disorbicillinol, bisvertinolon, dihydrobisvertinolone, and dihydrotrichotetronine. In Hypocrea jecorina (strain QM6a) (Trichoderma reesei), this protein is FAD-linked oxidoreductase sor8.